Reading from the N-terminus, the 519-residue chain is B3 domain-containing protein Os03g0620400 (519 aa).

A DNA-binding region (TF-B3 1) is located at residues 26–119 (MKCFHLQMSA…RFEVLILDSD (94 aa)). Positions 138 to 218 (ERNAAPVDIS…DPQMPPGRNY (81 aa)) are disordered. Positions 189-209 (SGEEGTDSSTSEDESSYELDD) are enriched in acidic residues. 2 DNA-binding regions (TF-B3) span residues 249-349 (VAIM…LRET) and 416-516 (YVSI…IRRN).

It localises to the nucleus. This Oryza sativa subsp. japonica (Rice) protein is B3 domain-containing protein Os03g0620400.